An 87-amino-acid polypeptide reads, in one-letter code: Small ribosomal subunit protein bS20 (87 aa).

It belongs to the bacterial ribosomal protein bS20 family.

Its function is as follows. Binds directly to 16S ribosomal RNA. This chain is Small ribosomal subunit protein bS20, found in Halothermothrix orenii (strain H 168 / OCM 544 / DSM 9562).